We begin with the raw amino-acid sequence, 287 residues long: uncharacterized protein (287 aa).

This sequence belongs to the AllH family.

This is an uncharacterized protein from Escherichia coli (strain K12).